Reading from the N-terminus, the 179-residue chain is Large ribosomal subunit protein uL5 (179 aa).

This sequence belongs to the universal ribosomal protein uL5 family. As to quaternary structure, part of the 50S ribosomal subunit; part of the 5S rRNA/L5/L18/L25 subcomplex. Contacts the 5S rRNA and the P site tRNA. Forms a bridge to the 30S subunit in the 70S ribosome.

In terms of biological role, this is one of the proteins that bind and probably mediate the attachment of the 5S RNA into the large ribosomal subunit, where it forms part of the central protuberance. In the 70S ribosome it contacts protein S13 of the 30S subunit (bridge B1b), connecting the 2 subunits; this bridge is implicated in subunit movement. Contacts the P site tRNA; the 5S rRNA and some of its associated proteins might help stabilize positioning of ribosome-bound tRNAs. This chain is Large ribosomal subunit protein uL5, found in Enterococcus faecalis (strain ATCC 700802 / V583).